Here is a 1409-residue protein sequence, read N- to C-terminus: DNA-directed RNA polymerase subunit beta' (1409 aa).

Residues Cys-70, Cys-72, Cys-85, and Cys-88 each contribute to the Zn(2+) site. Mg(2+) contacts are provided by Asp-460, Asp-462, and Asp-464. Residues Cys-814, Cys-888, Cys-895, and Cys-898 each coordinate Zn(2+).

Belongs to the RNA polymerase beta' chain family. In terms of assembly, the RNAP catalytic core consists of 2 alpha, 1 beta, 1 beta' and 1 omega subunit. When a sigma factor is associated with the core the holoenzyme is formed, which can initiate transcription. The cofactor is Mg(2+). Requires Zn(2+) as cofactor.

It catalyses the reaction RNA(n) + a ribonucleoside 5'-triphosphate = RNA(n+1) + diphosphate. In terms of biological role, DNA-dependent RNA polymerase catalyzes the transcription of DNA into RNA using the four ribonucleoside triphosphates as substrates. The polypeptide is DNA-directed RNA polymerase subunit beta' (Shewanella violacea).